The sequence spans 418 residues: MKYSAPIRLNTLGAIASQHGVLVVIGMLLVVPMAFPLLPIIATYCAAIFVILLPLGRLQHVLATASSVAFAWLLTLRNPSKGLVEAGLGDDALHYMNAFYEFQQAYCCGPLDVLKTGIRSAGGGEPIFWFLSYSVAKLFDTPLLVWAVLIFISLMLAWIAIYRCSERFAYVVFVSYLSTITLYALQGSAIRQAVAAGLVMIALDLLIRRKLVSAAGVGLIAAGTHSSAAVVLLACAVVVLFLSRDYGMLARRSSGLGRVGRLIVLLALAAAGAVFGSAEFVMSKIQARLSESQTGSAWELQLAVEAVLACLFAWLLRIKLPREEKMAFLLFVVVCFSTSLFAPAVGARLFRYTYCFYIVYLCAFFFARQGESLGQKKTLASLLLLASFGWAIFIVSARYQGLFVSGGVIDHFLAGPFF.

10 consecutive transmembrane segments (helical) span residues 21–41, 45–65, 142–162, 170–190, 222–242, 262–282, 296–316, 326–346, 347–367, and 377–397; these read VLVVIGMLLVVPMAFPLLPII, CAAIFVILLPLGRLQHVLATA, PLLVWAVLIFISLMLAWIAIY, YVVFVSYLSTITLYALQGSAI, AGTHSSAAVVLLACAVVVLFL, LIVLLALAAAGAVFGSAEFVM, SAWELQLAVEAVLACLFAWLL, MAFLLFVVVCFSTSLFAPAVG, ARLFRYTYCFYIVYLCAFFFA, and KTLASLLLLASFGWAIFIVSA.

The protein to S.marcescens SfuB.

The protein resides in the cell inner membrane. Probably involved in polymerization and/or export of exopolysaccharide EPS I which functions as a virulence factor. May play a role in export of EPS I or its intermediates across the membranes. The polypeptide is EPS I polysaccharide export inner membrane protein EpsF (epsF) (Ralstonia nicotianae (strain ATCC BAA-1114 / GMI1000) (Ralstonia solanacearum)).